The primary structure comprises 455 residues: MKKIEMYHHKKVLVLGLARSGVSAATIMHKLGAFVTVNDQKPFSENPEAQGLLEQGIKVICGSHPIELLDEGFELVIKNPGIPYNNPMIEKALKLKIPVITEVELAYQISEAPIVGITGTNGKTTTTTIIHHMLNTHKENSSLLAGNIGFPASAVAENATSDQYISMELSSFQLMGVETFKPHISVITNIYEAHLDYHTDRSEYVQAKWHIQKNQIADDFLVINWDQEELKNLTKQTKAQVIPFSTTQRLGQGSYVQNGNIMFNDEVIGERDNILLPGEHNLENVLASVAVAKTLGVTNEEIMHVLETFKGVEHRTQFVVEWQGRKFYNDSKATNILATQSALKGFKNPVVLLAGGLDRGNSFDELLPFFKNVKTLIVFGETADKIGRVGKIAGIEVHYVDNVEAAVPVAYRESAPGDIILLSPACASWDQYRTFEVRGNAYMDAIGELIEEVEK.

119-125 (GTNGKTT) lines the ATP pocket.

The protein belongs to the MurCDEF family.

The protein localises to the cytoplasm. The enzyme catalyses UDP-N-acetyl-alpha-D-muramoyl-L-alanine + D-glutamate + ATP = UDP-N-acetyl-alpha-D-muramoyl-L-alanyl-D-glutamate + ADP + phosphate + H(+). It participates in cell wall biogenesis; peptidoglycan biosynthesis. Functionally, cell wall formation. Catalyzes the addition of glutamate to the nucleotide precursor UDP-N-acetylmuramoyl-L-alanine (UMA). The protein is UDP-N-acetylmuramoylalanine--D-glutamate ligase of Listeria monocytogenes serovar 1/2a (strain ATCC BAA-679 / EGD-e).